The chain runs to 836 residues: Periostin (836 aa).

The N-terminal stretch at 1–21 (MIPFLPMFSLLLLLIVNPINA) is a signal peptide. The EMI domain maps to 40 to 94 (GPNVCALQQILGTKKKYFSTCKNWYKKSICGQKTTVLYECCPGYMRMEGMKGCPA). Cystine bridges form between Cys-44–Cys-80, Cys-69–Cys-333, Cys-79–Cys-92, Cys-208–Cys-311, and Cys-467–Cys-472. Position 60 is an S-cysteinyl cysteine (Cys-60). 4 FAS1 domains span residues 97-230 (PIDH…DRVL), 234-365 (GTSI…DQVL), 368-492 (DSAK…REII), and 496-628 (EKSL…DKLL). Asn-599 carries an N-linked (GlcNAc...) asparagine glycan.

In terms of assembly, homodimer. Interacts with BMP1 and fibronectin. Gamma-carboxylation is controversial. Gamma-carboxyglutamated; gamma-carboxyglutamate residues are formed by vitamin K dependent carboxylation; this may be required for calcium binding. According to a more recent report, does not contain vitamin K-dependent gamma-carboxyglutamate residues. In terms of tissue distribution, widely expressed with highest levels in aorta, stomach, lower gastrointestinal tract, placenta, uterus, thyroid tissue and breast. Expressed in the kidney. Expressed in the lung. Up-regulated in epithelial ovarian tumors. Not expressed in normal ovaries. Also highly expressed at the tumor periphery of lung carcinoma tissue but not within the tumor. Overexpressed in breast cancers.

The protein localises to the golgi apparatus. It is found in the secreted. It localises to the extracellular space. Its subcellular location is the extracellular matrix. Induces cell attachment and spreading and plays a role in cell adhesion. Enhances incorporation of BMP1 in the fibronectin matrix of connective tissues, and subsequent proteolytic activation of lysyl oxidase LOX. The polypeptide is Periostin (POSTN) (Homo sapiens (Human)).